The primary structure comprises 267 residues: Sepiapterin reductase (267 aa).

The residue at position 1 (M1) is an N-acetylmethionine. NADP(+) is bound at residue G20–G26. S38 carries the phosphoserine modification. NADP(+)-binding positions include R48–N49 and D75–L76. Residues S163–I164 and Y176 each bind substrate. K180 lines the NADP(+) pocket. S201 is subject to Phosphoserine. Substrate is bound at residue G205. L207–Q212 is a binding site for NADP(+). At S219 the chain carries Phosphoserine. Residue D263 participates in substrate binding.

It belongs to the sepiapterin reductase family. In terms of assembly, homodimer.

Its subcellular location is the cytoplasm. It catalyses the reaction L-erythro-7,8-dihydrobiopterin + NADP(+) = L-sepiapterin + NADPH + H(+). The catalysed reaction is (6R)-L-erythro-5,6,7,8-tetrahydrobiopterin + 2 NADP(+) = 6-pyruvoyl-5,6,7,8-tetrahydropterin + 2 NADPH + 2 H(+). Its function is as follows. Catalyzes the final one or two reductions in tetra-hydrobiopterin biosynthesis to form 5,6,7,8-tetrahydrobiopterin. This Bos taurus (Bovine) protein is Sepiapterin reductase (SPR).